An 891-amino-acid polypeptide reads, in one-letter code: Kinesin-like protein KIN-UB (891 aa).

The disordered stretch occupies residues 1 to 54; that stretch reads MSGKVANATPKAAAGKPRLSAAGGGAYRRTSSGPLPSAGGGGGRASSESGVSSR. Residues 45–54 show a composition bias toward low complexity; it reads ASSESGVSSR. The region spanning 54–400 is the Kinesin motor domain; that stretch reads RVRVAVRLRP…IMFGQRAMKV (347 aa). 139–146 contributes to the ATP binding site; sequence GQTGTGKT. Residues 370–378 carry the D-BOX motif; sequence RTSLVVTIG. Residues 502-592 adopt a coiled-coil conformation; it reads TSSEVGEVQN…ADETRRSLDR (91 aa). Residues 586–595 show a composition bias toward basic and acidic residues; it reads TRRSLDRGDG. The segment at 586–626 is disordered; that stretch reads TRRSLDRGDGSGKIFPGFDSLMSHSRNSQPREQSNGPKPPI. The segment covering 607 to 621 has biased composition (polar residues); the sequence is MSHSRNSQPREQSNG. ARM repeat units follow at residues 623–662, 664–704, 706–746, and 748–787; these read KPPIAKLFEQVGLQKILSLLESEEPDVRVHAVKVVANLAA, EANQ…NLAM, ETNQ…NLCG, and DKLQTRLRGEGGIKALLGMVKCGHPDVLAQVARGIANFAK.

Belongs to the TRAFAC class myosin-kinesin ATPase superfamily. Kinesin family. Ungrouped subfamily.

The protein localises to the cytoplasm. It is found in the cytoskeleton. The sequence is that of Kinesin-like protein KIN-UB from Oryza sativa subsp. japonica (Rice).